A 302-amino-acid polypeptide reads, in one-letter code: Methionyl-tRNA formyltransferase (302 aa).

S103 to P106 is a binding site for (6S)-5,6,7,8-tetrahydrofolate.

Belongs to the Fmt family.

The catalysed reaction is L-methionyl-tRNA(fMet) + (6R)-10-formyltetrahydrofolate = N-formyl-L-methionyl-tRNA(fMet) + (6S)-5,6,7,8-tetrahydrofolate + H(+). Functionally, attaches a formyl group to the free amino group of methionyl-tRNA(fMet). The formyl group appears to play a dual role in the initiator identity of N-formylmethionyl-tRNA by promoting its recognition by IF2 and preventing the misappropriation of this tRNA by the elongation apparatus. The sequence is that of Methionyl-tRNA formyltransferase from Pseudothermotoga lettingae (strain ATCC BAA-301 / DSM 14385 / NBRC 107922 / TMO) (Thermotoga lettingae).